The chain runs to 480 residues: RNA-splicing ligase RtcB homolog (480 aa).

Residues D93, C96, H202, H234, and H328 each contribute to the Mn(2+) site. 201 to 205 (NHYTE) serves as a coordination point for GMP. GMP-binding positions include 328–329 (HN), 377–380 (GGTM), S384, 403–406 (HGAG), and K479. H403 acts as the GMP-histidine intermediate in catalysis.

The protein belongs to the RtcB family. In terms of assembly, catalytic component of the tRNA-splicing ligase complex. The cofactor is Mn(2+).

It carries out the reaction a 3'-end 3'-phospho-ribonucleotide-RNA + a 5'-end dephospho-ribonucleoside-RNA + GTP = a ribonucleotidyl-ribonucleotide-RNA + GMP + diphosphate. It catalyses the reaction a 3'-end 2',3'-cyclophospho-ribonucleotide-RNA + a 5'-end dephospho-ribonucleoside-RNA + GTP + H2O = a ribonucleotidyl-ribonucleotide-RNA + GMP + diphosphate + H(+). Functionally, catalytic subunit of the tRNA-splicing ligase complex that acts by directly joining spliced tRNA halves to mature-sized tRNAs by incorporating the precursor-derived splice junction phosphate into the mature tRNA as a canonical 3',5'-phosphodiester. May act as an RNA ligase with broad substrate specificity, and may function toward other RNAs. This is RNA-splicing ligase RtcB homolog from Thalassiosira pseudonana (Marine diatom).